The following is a 688-amino-acid chain: Glycine--tRNA ligase beta subunit (688 aa).

Belongs to the class-II aminoacyl-tRNA synthetase family. As to quaternary structure, tetramer of two alpha and two beta subunits.

It is found in the cytoplasm. It carries out the reaction tRNA(Gly) + glycine + ATP = glycyl-tRNA(Gly) + AMP + diphosphate. The chain is Glycine--tRNA ligase beta subunit from Clostridioides difficile (strain 630) (Peptoclostridium difficile).